Here is a 419-residue protein sequence, read N- to C-terminus: Multifunctional CCA protein (419 aa).

Residues glycine 8 and arginine 11 each coordinate ATP. CTP is bound by residues glycine 8 and arginine 11. Mg(2+)-binding residues include aspartate 21 and aspartate 23. Arginine 91, arginine 137, and arginine 140 together coordinate ATP. 3 residues coordinate CTP: arginine 91, arginine 137, and arginine 140. The HD domain maps to 228–334; that stretch reads SFLHTMLVLQ…IKLFNKLDVW (107 aa).

Belongs to the tRNA nucleotidyltransferase/poly(A) polymerase family. Bacterial CCA-adding enzyme type 1 subfamily. Monomer. Can also form homodimers and oligomers. The cofactor is Mg(2+). It depends on Ni(2+) as a cofactor.

The catalysed reaction is a tRNA precursor + 2 CTP + ATP = a tRNA with a 3' CCA end + 3 diphosphate. The enzyme catalyses a tRNA with a 3' CCA end + 2 CTP + ATP = a tRNA with a 3' CCACCA end + 3 diphosphate. Its function is as follows. Catalyzes the addition and repair of the essential 3'-terminal CCA sequence in tRNAs without using a nucleic acid template. Adds these three nucleotides in the order of C, C, and A to the tRNA nucleotide-73, using CTP and ATP as substrates and producing inorganic pyrophosphate. tRNA 3'-terminal CCA addition is required both for tRNA processing and repair. Also involved in tRNA surveillance by mediating tandem CCA addition to generate a CCACCA at the 3' terminus of unstable tRNAs. While stable tRNAs receive only 3'-terminal CCA, unstable tRNAs are marked with CCACCA and rapidly degraded. This chain is Multifunctional CCA protein, found in Mannheimia succiniciproducens (strain KCTC 0769BP / MBEL55E).